The following is a 183-amino-acid chain: Protein vem-1 (183 aa).

The helical transmembrane segment at 9 to 29 threads the bilayer; it reads FTMYDAVFLVVVLGFFFYWLT. Residues 47 to 146 form the Cytochrome b5 heme-binding domain; the sequence is MSDMTVEELR…FKYLTVGRLV (100 aa).

Belongs to the cytochrome b5 family. MAPR subfamily. As to quaternary structure, interacts with unc-40 (via cytoplasmic domain). As to expression, expressed in the AVG pioneer midline neuron and in several nerve ring neurons that extend projecting axons into the right ventral nerve cord.

It localises to the membrane. The protein localises to the cell projection. Its subcellular location is the axon. Functionally, transmembrane protein required for the axon guidance of a subset of ventral nerve cord-associated interneurons and motor neurons. May function with the netrin receptor unc-40 in axon guidance. This chain is Protein vem-1, found in Caenorhabditis elegans.